Reading from the N-terminus, the 76-residue chain is Small ribosomal subunit protein bS18 (76 aa).

It belongs to the bacterial ribosomal protein bS18 family. As to quaternary structure, part of the 30S ribosomal subunit. Forms a tight heterodimer with protein bS6.

Functionally, binds as a heterodimer with protein bS6 to the central domain of the 16S rRNA, where it helps stabilize the platform of the 30S subunit. This Brevibacillus brevis (strain 47 / JCM 6285 / NBRC 100599) protein is Small ribosomal subunit protein bS18.